The sequence spans 51 residues: Large ribosomal subunit protein eL39 (51 aa).

A disordered region spans residues 32 to 51 (KRRVTRSPARRHWRRQKLKA).

Belongs to the eukaryotic ribosomal protein eL39 family.

The protein is Large ribosomal subunit protein eL39 of Pyrobaculum calidifontis (strain DSM 21063 / JCM 11548 / VA1).